A 123-amino-acid chain; its full sequence is Guanine nucleotide exchange factor MSS4 (123 aa).

Methionine 1 is modified (N-acetylmethionine). The region spanning 9–123 (ELVSAEGRNR…YVALERVSHE (115 aa)) is the MSS4 domain. Cysteine 23, cysteine 26, cysteine 94, and cysteine 97 together coordinate Zn(2+).

Belongs to the DSS4/MSS4 family. As to quaternary structure, interacts with RAB8A.

In terms of biological role, guanine-nucleotide-releasing protein that acts on members of the SEC4/YPT1/RAB subfamily. Stimulates GDP release from both YPT1, RAB3A and RAB10, but is less active on these proteins than on the SEC4 protein. Might play a general role in vesicular transport. The polypeptide is Guanine nucleotide exchange factor MSS4 (Mus musculus (Mouse)).